The following is a 101-amino-acid chain: Small ribosomal subunit protein uS14 (101 aa).

This sequence belongs to the universal ribosomal protein uS14 family. As to quaternary structure, part of the 30S ribosomal subunit. Contacts proteins S3 and S10.

Functionally, binds 16S rRNA, required for the assembly of 30S particles and may also be responsible for determining the conformation of the 16S rRNA at the A site. The sequence is that of Small ribosomal subunit protein uS14 from Buchnera aphidicola subsp. Acyrthosiphon pisum (strain APS) (Acyrthosiphon pisum symbiotic bacterium).